The primary structure comprises 2601 residues: Centrosomal protein of 295 kDa (2601 aa).

The necessary for centriole targeting and microtubule association stretch occupies residues 1–560 (MKRKVVNTHK…KKTQPTGVGI (560 aa)). Phosphoserine is present on S14. 2 coiled-coil regions span residues 207–273 (KRPD…EDLA) and 500–552 (AARI…KRKK). Phosphoserine occurs at positions 654 and 938. Residues 1008 to 1029 (PSADTKSGKIQEQHSSKSEKGL) are disordered. A compositionally biased stretch (basic and acidic residues) spans 1013-1027 (KSGKIQEQHSSKSEK). 2 coiled-coil regions span residues 1053–1082 (LHDSLKLLQEQLTKQRDTLQARHEAQVELL) and 1498–1544 (IQSH…VSSE). A disordered region spans residues 1558-1580 (ADSERTQKSFPTKSNDTLPSSHR). Residues 1565 to 1577 (KSFPTKSNDTLPS) show a composition bias toward polar residues. S1637 is subject to Phosphoserine. The stretch at 1728 to 1758 (QEKLLVQRQTALQQQIQKHEETLKDFFKDSQ) forms a coiled coil. Basic and acidic residues-rich tracts occupy residues 1795–1827 (RHADRNNSDDNHLASEDTSAKQSGEHLEKDLGR), 1985–2003 (FSEHMDDSKQESTTSKEEE), and 2100–2112 (DNRDFYQRSDSSS). Disordered stretches follow at residues 1795–1834 (RHADRNNSDDNHLASEDTSAKQSGEHLEKDLGRRSSKPPV), 1979–2004 (LTDPESFSEHMDDSKQESTTSKEEET), and 2085–2117 (HPDFDLSSSSSGISPDNRDFYQRSDSSSESHCA). T2473 is modified (phosphothreonine). The tract at residues 2478–2601 (SLQEAFIKRK…LEKLRAKNTC (124 aa)) is ALMS motif. Positions 2556–2581 (RLYNQLAEVKQQKEEKTKQEAYAQNR) form a coiled coil.

Interacts (via ALMS motif) with microtubules; this interaction is direct.

The protein localises to the cytoplasm. The protein resides in the cytoskeleton. It is found in the microtubule organizing center. Its subcellular location is the centrosome. It localises to the centriole. The protein localises to the spindle. Centriole-enriched microtubule-binding protein involved in centriole biogenesis. Essential for the generation of the distal portion of new-born centrioles in a CPAP- and CEP120-mediated elongation dependent manner during the cell cycle S/G2 phase after formation of the initiating cartwheel structure. Required for the recruitment of centriolar proteins, such as POC1B, POC5 and CEP135, into the distal portion of centrioles. Also required for centriole-to-centrosome conversion during mitotic progression, but is dispensable for cartwheel removal or centriole disengagement. Binds to and stabilizes centriolar microtubule. May be involved in ciliogenesis. The chain is Centrosomal protein of 295 kDa from Homo sapiens (Human).